Here is a 316-residue protein sequence, read N- to C-terminus: Glutathione synthetase (316 aa).

Residues 125–311 enclose the ATP-grasp domain; it reads KLFTAWFPEL…ITGMLMNAIE (187 aa). 151–207 contributes to the ATP binding site; the sequence is HQKHGDVIFKPLDGMGGASIFRLKKDDPNVGVIIETLTEHGNRFCMAQNFLPAIKEG. Mg(2+)-binding residues include E281 and N283.

The protein belongs to the prokaryotic GSH synthase family. It depends on Mg(2+) as a cofactor. Mn(2+) is required as a cofactor.

It catalyses the reaction gamma-L-glutamyl-L-cysteine + glycine + ATP = glutathione + ADP + phosphate + H(+). It functions in the pathway sulfur metabolism; glutathione biosynthesis; glutathione from L-cysteine and L-glutamate: step 2/2. This Photorhabdus laumondii subsp. laumondii (strain DSM 15139 / CIP 105565 / TT01) (Photorhabdus luminescens subsp. laumondii) protein is Glutathione synthetase.